A 154-amino-acid polypeptide reads, in one-letter code: Large ribosomal subunit protein uL15 (154 aa).

The interval 1-57 (MRFQDLHPQAGSRRRKRRIGRGIAAGQGASGGFGMRGQKSRSGRPTRPGFEGGQNPL) is disordered. Over residues 23–35 (IAAGQGASGGFGM) the composition is skewed to gly residues.

The protein belongs to the universal ribosomal protein uL15 family. As to quaternary structure, part of the 50S ribosomal subunit.

Its function is as follows. Binds to the 23S rRNA. In Thermosynechococcus vestitus (strain NIES-2133 / IAM M-273 / BP-1), this protein is Large ribosomal subunit protein uL15.